We begin with the raw amino-acid sequence, 78 residues long: Large ribosomal subunit protein bL28 (78 aa).

Belongs to the bacterial ribosomal protein bL28 family.

This chain is Large ribosomal subunit protein bL28, found in Prochlorococcus marinus (strain SARG / CCMP1375 / SS120).